Reading from the N-terminus, the 1253-residue chain is Pleckstrin homology-like domain family B member 2 (1253 aa).

Residues 1–12 (MEEHSYIQKELD) are compositionally biased toward basic and acidic residues. Disordered stretches follow at residues 1–43 (MEEH…PKKY), 60–159 (LTLS…KSHD), and 187–212 (DAGPPPISRSGAASMPSSPKQARKMS). The span at 29-43 (NDSQNMMESLSPKKY) shows a compositional bias: polar residues. A phosphoserine mark is found at Ser71 and Ser73. Over residues 74-96 (PLGTSVRSSPSLAKIQGSKQFSY) the composition is skewed to polar residues. A compositionally biased stretch (basic and acidic residues) spans 126-144 (ADFDHYTGRDSERALRLSE). Phosphoserine occurs at positions 157, 204, 212, 242, and 245. The disordered stretch occupies residues 265 to 286 (NQLTPLSLPPRNSLGNSKRTKL). 11 positions are modified to phosphoserine: Ser330, Ser334, Ser348, Ser351, Ser384, Ser387, Ser415, Ser420, Ser468, Ser489, and Ser501. At Thr504 the chain carries Phosphothreonine. Ser513 is subject to Phosphoserine. A disordered region spans residues 525–567 (LSQSSASFFTPRSTRNDELLSDLTRTPPPPSSTFPKASSESSY). Residues Thr550 and Thr574 each carry the phosphothreonine modification. Coiled coils occupy residues 584-696 (SQEL…LDNC) and 722-807 (FEDL…LCNL). Thr898 bears the Phosphothreonine mark. Residues 1032–1098 (IARIEEMERL…QKLIEKEVKI (67 aa)) adopt a coiled-coil conformation. The 104-residue stretch at 1143–1246 (EKTCRGFLIK…WMDVIVTGAE (104 aa)) folds into the PH domain.

Interacts with FLNC. Interacts with AMOTL2; interaction may facilitate PHLDB2 localization to the myotube podosome cortex that surrounds the core. Part of a cortical microtubule stabilization complex (CMSC) composed of KANK1, PPFIA1, PPFIBP1, ERC1/ELKS, PHLDB2/LL5beta, CLASPs, KIF21A and possibly additional interactors; within CMSCs KANK1 and PHLDB2/LL5beta appear to be the core components for targeting of microtubule-binding proteins KIF21A and CLASPs, whereas PPFIA1, PPFIBP1 and ERC1/ELKS serve as scaffolds for protein clustering.

The protein resides in the cytoplasm. It localises to the cell cortex. The protein localises to the membrane. It is found in the cell projection. Its subcellular location is the podosome. Functionally, seems to be involved in the assembly of the postsynaptic apparatus. May play a role in acetyl-choline receptor (AChR) aggregation in the postsynaptic membrane. This is Pleckstrin homology-like domain family B member 2 (PHLDB2) from Homo sapiens (Human).